Here is a 305-residue protein sequence, read N- to C-terminus: DNA-directed RNA polymerase 35 kDa subunit (305 aa).

The protein belongs to the poxviridae DNA-directed RNA polymerase 35 kDa subunit family. The DNA-dependent RNA polymerase used for intermediate and late genes expression consists of eight subunits 147 kDa, 133 kDa, 35 kDa, 30 kDa, 22 kDa, 19 kDa, 18 kDa and 7 kDa totalling more than 500 kDa in mass. The same holoenzyme, with the addition of the transcription-specificity factor RAP94, is used for early gene expression.

It is found in the virion. It carries out the reaction RNA(n) + a ribonucleoside 5'-triphosphate = RNA(n+1) + diphosphate. Its function is as follows. Part of the DNA-dependent RNA polymerase which catalyzes the transcription of viral DNA into RNA using the four ribonucleoside triphosphates as substrates. Responsible for the transcription of early, intermediate and late genes. DNA-dependent RNA polymerase associates with the early transcription factor (ETF), itself composed of D6 and A7, thereby allowing the early genes transcription. Late transcription, and probably also intermediate transcription, require newly synthesized RNA polymerase. This is DNA-directed RNA polymerase 35 kDa subunit (OPG156) from Bos taurus (Bovine).